A 1459-amino-acid chain; its full sequence is PPE family protein PPE34 (1459 aa).

It belongs to the mycobacterial PPE family. In terms of assembly, interacts with human TLR2.

It localises to the cell membrane. The protein resides in the secreted. It is found in the cell wall. Its subcellular location is the cell surface. Facilitates a shift in the ensuing immunity toward the Th2 phenotype and could aid in immune evasion by mycobacteria. Interacts with human Toll-like receptor 2 (TLR2) and triggers functional maturation of human dendritic cells (DCs), leading to secretion of IL-4, IL-5 and IL-10 from CD4(+) T cells and induction of Th2 immune response. Maturation of DCs involves PI3K, ERK1/2, p38 MAPK and NF-kappa-B signaling pathways. The chain is PPE family protein PPE34 from Mycobacterium tuberculosis (strain ATCC 25618 / H37Rv).